A 122-amino-acid chain; its full sequence is MFSITRRLLSKNWKFLPNRERIVFKNKKEAFFDFVKVSGANILWQIGLAVLVLEFAFPTPDIVYDLKRLISPDFDLFCKSGNLVDFEMDFENKLRSIRREEIRSLEQYTNAKSPEAKFGGII.

This is an uncharacterized protein from Caenorhabditis elegans.